A 211-amino-acid chain; its full sequence is Large ribosomal subunit protein uL3 (211 aa).

At Gln150 the chain carries N5-methylglutamine.

Belongs to the universal ribosomal protein uL3 family. As to quaternary structure, part of the 50S ribosomal subunit. Forms a cluster with proteins L14 and L19. In terms of processing, methylated by PrmB.

Functionally, one of the primary rRNA binding proteins, it binds directly near the 3'-end of the 23S rRNA, where it nucleates assembly of the 50S subunit. This is Large ribosomal subunit protein uL3 from Pseudomonas aeruginosa (strain LESB58).